We begin with the raw amino-acid sequence, 221 residues long: MEKSEATTIEIGETSRESKGKTPLLAEVEQTARTAGSYRRGVAIFDLILRVSAATSALAATITMGTTEQTLPFFTQFFQFQASYDDLPAFTFFVIALSIVTGYLVLSVPFSVVCIAQPLAAVPRLLLIVCDTLTVTLATAAASSSAAIVYLAHNGNADANWLAICQQFGDFCQRVSGGGGGVVRGGGSAHIHGGALRSRPEETLTDGVDVIHYWDRRWCEI.

The interval 1–21 (MEKSEATTIEIGETSRESKGK) is disordered. At 1-41 (MEKSEATTIEIGETSRESKGKTPLLAEVEQTARTAGSYRRG) the chain is on the cytoplasmic side. Residues 42-62 (VAIFDLILRVSAATSALAATI) traverse the membrane as a helical segment. At 63 to 89 (TMGTTEQTLPFFTQFFQFQASYDDLPA) the chain is on the extracellular side. The helical transmembrane segment at 90–110 (FTFFVIALSIVTGYLVLSVPF) threads the bilayer. Over 111-131 (SVVCIAQPLAAVPRLLLIVCD) the chain is Cytoplasmic. A helical membrane pass occupies residues 132 to 152 (TLTVTLATAAASSSAAIVYLA). The Extracellular portion of the chain corresponds to 153–221 (HNGNADANWL…HYWDRRWCEI (69 aa)).

It belongs to the Casparian strip membrane proteins (CASP) family. As to quaternary structure, homodimer and heterodimers.

It is found in the cell membrane. Regulates membrane-cell wall junctions and localized cell wall deposition. Required for establishment of the Casparian strip membrane domain (CSD) and the subsequent formation of Casparian strips, a cell wall modification of the root endodermis that determines an apoplastic barrier between the intraorganismal apoplasm and the extraorganismal apoplasm and prevents lateral diffusion. This Erythranthe guttata (Yellow monkey flower) protein is Casparian strip membrane protein 2.